The chain runs to 91 residues: Small ribosomal subunit protein uS19 (91 aa).

This sequence belongs to the universal ribosomal protein uS19 family.

Its function is as follows. Protein S19 forms a complex with S13 that binds strongly to the 16S ribosomal RNA. The polypeptide is Small ribosomal subunit protein uS19 (Burkholderia cenocepacia (strain HI2424)).